The primary structure comprises 301 residues: Probable 5-dehydro-4-deoxyglucarate dehydratase (301 aa).

The protein belongs to the DapA family.

It carries out the reaction 5-dehydro-4-deoxy-D-glucarate + H(+) = 2,5-dioxopentanoate + CO2 + H2O. It participates in carbohydrate acid metabolism; D-glucarate degradation; 2,5-dioxopentanoate from D-glucarate: step 2/2. This chain is Probable 5-dehydro-4-deoxyglucarate dehydratase, found in Cereibacter sphaeroides (strain ATCC 17029 / ATH 2.4.9) (Rhodobacter sphaeroides).